A 143-amino-acid polypeptide reads, in one-letter code: AP-4 complex subunit sigma (143 aa).

The protein belongs to the adaptor complexes small subunit family. In terms of assembly, adaptor protein complex 4 (AP-4) is a heterotetramer composed of two large adaptins (epsilon-type subunit and beta-type subunit), a medium adaptin (mu-type subunit) and a small adaptin (sigma-type subunit). Interacts with EHD2.

It localises to the golgi apparatus. Its subcellular location is the trans-Golgi network. The protein resides in the membrane. The protein localises to the coated pit. In terms of biological role, subunit of novel type of clathrin- or non-clathrin-associated protein coat involved in targeting proteins from the trans-Golgi network (TGN) to the endosomal-lysosomal system. The polypeptide is AP-4 complex subunit sigma (Arabidopsis thaliana (Mouse-ear cress)).